The following is an 854-amino-acid chain: Putative Tricorn-like protease C-terminal subunit (854 aa).

The active-site Charge relay system is H539. The tract at residues 554-646 (PIGGLGADYE…RVTVKLLKDE (93 aa)) is PDZ-like. Position 709 (G709) interacts with substrate. Residue S756 is the Nucleophile of the active site. The active-site Charge relay system is the E814.

It belongs to the peptidase S41B family.

Its subcellular location is the cytoplasm. Functionally, degrades oligopeptides in a sequential manner. This Sulfurisphaera tokodaii (strain DSM 16993 / JCM 10545 / NBRC 100140 / 7) (Sulfolobus tokodaii) protein is Putative Tricorn-like protease C-terminal subunit (triC).